A 602-amino-acid polypeptide reads, in one-letter code: Elongation factor 4 (602 aa).

The region spanning 5-187 (DHIRNFAIIA…QIIVSLPAPE (183 aa)) is the tr-type G domain. GTP-binding positions include 17–22 (DHGKST) and 134–137 (NKVD).

Belongs to the TRAFAC class translation factor GTPase superfamily. Classic translation factor GTPase family. LepA subfamily.

It is found in the cell inner membrane. It carries out the reaction GTP + H2O = GDP + phosphate + H(+). In terms of biological role, required for accurate and efficient protein synthesis under certain stress conditions. May act as a fidelity factor of the translation reaction, by catalyzing a one-codon backward translocation of tRNAs on improperly translocated ribosomes. Back-translocation proceeds from a post-translocation (POST) complex to a pre-translocation (PRE) complex, thus giving elongation factor G a second chance to translocate the tRNAs correctly. Binds to ribosomes in a GTP-dependent manner. The sequence is that of Elongation factor 4 from Pelagibacter ubique (strain HTCC1062).